A 292-amino-acid polypeptide reads, in one-letter code: Coatomer subunit epsilon-1 (292 aa).

This sequence belongs to the COPE family. As to quaternary structure, oligomeric complex that consists of at least the alpha, beta, beta', gamma, delta, epsilon and zeta subunits.

Its subcellular location is the cytoplasm. The protein localises to the golgi apparatus membrane. It is found in the cytoplasmic vesicle. It localises to the COPI-coated vesicle membrane. Its function is as follows. The coatomer is a cytosolic protein complex that binds to dilysine motifs and reversibly associates with Golgi non-clathrin-coated vesicles, which further mediate biosynthetic protein transport from the ER, via the Golgi up to the trans Golgi network. The coatomer complex is required for budding from Golgi membranes, and is essential for the retrograde Golgi-to-ER transport of dilysine-tagged proteins. In Arabidopsis thaliana (Mouse-ear cress), this protein is Coatomer subunit epsilon-1.